A 92-amino-acid polypeptide reads, in one-letter code: Promotilin (92 aa).

Residues arginine 12–lysine 49 form a disordered region.

The protein belongs to the motilin family.

The protein resides in the secreted. Plays an important role in the regulation of interdigestive gastrointestinal motility and indirectly causes rhythmic contraction of duodenal and colonic smooth muscle. This Equus caballus (Horse) protein is Promotilin (MLN).